A 37-amino-acid chain; its full sequence is Dolichyl-diphosphooligosaccharide--protein glycosyltransferase subunit 4 (37 aa).

Residues 1-4 (MITD) are Lumenal-facing. The chain crosses the membrane as a helical span at residues 5–25 (VQLAIFANMLGVSLFLLVVLY). The Cytoplasmic segment spans residues 26-37 (HYVAVNNPKKQE).

It belongs to the OST4 family. As to quaternary structure, component of the oligosaccharyltransferase (OST) complex. OST exists in two different complex forms which contain common core subunits RPN1, RPN2, OST48, OST4, DAD1 and TMEM258, either STT3A or STT3B as catalytic subunits, and form-specific accessory subunits. STT3A complex assembly occurs through the formation of 3 subcomplexes. Subcomplex 1 contains RPN1 and TMEM258, subcomplex 2 contains the STT3A-specific subunits STT3A, DC2/OSTC, and KCP2 as well as the core subunit OST4, and subcomplex 3 contains RPN2, DAD1, and OST48. The STT3A complex can form stable complexes with the Sec61 complex or with both the Sec61 and TRAP complexes.

It localises to the endoplasmic reticulum. It is found in the endoplasmic reticulum membrane. The protein operates within protein modification; protein glycosylation. Its function is as follows. Subunit of the oligosaccharyl transferase (OST) complex that catalyzes the initial transfer of a defined glycan (Glc(3)Man(9)GlcNAc(2) in eukaryotes) from the lipid carrier dolichol-pyrophosphate to an asparagine residue within an Asn-X-Ser/Thr consensus motif in nascent polypeptide chains, the first step in protein N-glycosylation. N-glycosylation occurs cotranslationally and the complex associates with the Sec61 complex at the channel-forming translocon complex that mediates protein translocation across the endoplasmic reticulum (ER). All subunits are required for a maximal enzyme activity. Specifically involved in maintaining stability of STT3A-containing OST complexes. The chain is Dolichyl-diphosphooligosaccharide--protein glycosyltransferase subunit 4 from Homo sapiens (Human).